Reading from the N-terminus, the 245-residue chain is Exosome complex component RRP41 (245 aa).

Position 2 is an N-acetylalanine (alanine 2).

The protein belongs to the RNase PH family. Component of the RNA exosome core complex (Exo-9), composed of EXOSC1, EXOSC2, EXOSC3, EXOSC4, EXOSC5, EXOSC6, EXOSC7, EXOSC8 and EXOSC9; within the complex interacts with EXOSC2, EXOSC7 and EXOSC9. The catalytically inactive RNA exosome core complex (Exo-9) associates with the catalytic subunit EXOSC10/RRP6. Exo-9 may associate with DIS3 to form the nucleolar exosome complex, or DIS3L to form the cytoplasmic exosome complex. Exo-9 is formed by a hexameric base ring consisting of the heterodimers EXOSC4-EXOSC9, EXOSC5-EXOSC8 and EXOSC6-EXOSC7, and a cap ring consisting of EXOSC1, EXOSC2 and EXOSC3. The RNA exosome complex associates with cofactors C1D/RRP47, MPHOSPH6/MPP6 and MTREX/MTR4. Interacts with DDX60. Interacts with DIS3; the interaction is direct.

It localises to the cytoplasm. It is found in the nucleus. The protein resides in the nucleolus. The protein localises to the nucleoplasm. Non-catalytic component of the RNA exosome complex which has 3'-&gt;5' exoribonuclease activity and participates in a multitude of cellular RNA processing and degradation events. In the nucleus, the RNA exosome complex is involved in proper maturation of stable RNA species such as rRNA, snRNA and snoRNA, in the elimination of RNA processing by-products and non-coding 'pervasive' transcripts, such as antisense RNA species and promoter-upstream transcripts (PROMPTs), and of mRNAs with processing defects, thereby limiting or excluding their export to the cytoplasm. The RNA exosome may be involved in Ig class switch recombination (CSR) and/or Ig variable region somatic hypermutation (SHM) by targeting AICDA deamination activity to transcribed dsDNA substrates. In the cytoplasm, the RNA exosome complex is involved in general mRNA turnover and specifically degrades inherently unstable mRNAs containing AU-rich elements (AREs) within their 3' untranslated regions, and in RNA surveillance pathways, preventing translation of aberrant mRNAs. It seems to be involved in degradation of histone mRNA. The catalytic inactive RNA exosome core complex of 9 subunits (Exo-9) is proposed to play a pivotal role in the binding and presentation of RNA for ribonucleolysis, and to serve as a scaffold for the association with catalytic subunits and accessory proteins or complexes. EXOSC4 binds to ARE-containing RNAs. This Mus musculus (Mouse) protein is Exosome complex component RRP41 (Exosc4).